The chain runs to 409 residues: MLYYLFQYLDKYFDFPGAGVFQYITFRSALAIIMSLLISTIFGKRVISYLSRLQVGETVRELGLEGQTQKAGTPTMGGLIIIFSTLLPVLLLAKLNNIYIILLIVTTIWMGAIGFLDDYIKIFKKDKAGLKGIFKVIGQVGLGLIVGTTLYFHQDVTIRENISKNKIEVYSTQKGANTLSSDKKSTATTIPFFKNNEFDYAELLAWTGDGYRNYAWLIFIPIVIFIITAVSNGANLTDGIDGLAAGTSAISVIAIGVFTFVSGNVIFSNYLNIMFIPNSGEMTVFIAAFVGALIGFLWYNSYPAAVFMGDTGSLTIGGIIAVLAIAVRKEMLIPVFCGIFLAENLSVVLQVSYFKYTKKRFGEGRRIFLMSPLHHHYQKKGYHESKIVTRFWIVGILLAIVSIVTLKLR.

10 consecutive transmembrane segments (helical) span residues 23–43, 73–93, 95–115, 132–152, 214–234, 247–267, 279–299, 305–325, 331–351, and 386–406; these read YITF…TIFG, TPTM…LLLA, LNNI…AIGF, GIFK…TLYF, YAWL…SNGA, TSAI…NVIF, SGEM…FLWY, AVFM…VLAI, MLIP…VLQV, and KIVT…IVTL.

Belongs to the glycosyltransferase 4 family. MraY subfamily. The cofactor is Mg(2+).

It is found in the cell inner membrane. The catalysed reaction is UDP-N-acetyl-alpha-D-muramoyl-L-alanyl-gamma-D-glutamyl-meso-2,6-diaminopimeloyl-D-alanyl-D-alanine + di-trans,octa-cis-undecaprenyl phosphate = di-trans,octa-cis-undecaprenyl diphospho-N-acetyl-alpha-D-muramoyl-L-alanyl-D-glutamyl-meso-2,6-diaminopimeloyl-D-alanyl-D-alanine + UMP. It functions in the pathway cell wall biogenesis; peptidoglycan biosynthesis. Functionally, catalyzes the initial step of the lipid cycle reactions in the biosynthesis of the cell wall peptidoglycan: transfers peptidoglycan precursor phospho-MurNAc-pentapeptide from UDP-MurNAc-pentapeptide onto the lipid carrier undecaprenyl phosphate, yielding undecaprenyl-pyrophosphoryl-MurNAc-pentapeptide, known as lipid I. In Flavobacterium psychrophilum (strain ATCC 49511 / DSM 21280 / CIP 103535 / JIP02/86), this protein is Phospho-N-acetylmuramoyl-pentapeptide-transferase.